The chain runs to 227 residues: Thiamine-phosphate synthase (227 aa).

Residues 50-54 (QFRQK) and aspartate 82 contribute to the 4-amino-2-methyl-5-(diphosphooxymethyl)pyrimidine site. Aspartate 83 and aspartate 102 together coordinate Mg(2+). Threonine 121 lines the 4-amino-2-methyl-5-(diphosphooxymethyl)pyrimidine pocket. 147–149 (TTS) is a binding site for 2-[(2R,5Z)-2-carboxy-4-methylthiazol-5(2H)-ylidene]ethyl phosphate. Lysine 150 provides a ligand contact to 4-amino-2-methyl-5-(diphosphooxymethyl)pyrimidine. 2-[(2R,5Z)-2-carboxy-4-methylthiazol-5(2H)-ylidene]ethyl phosphate is bound by residues glycine 178 and 198 to 199 (LS).

This sequence belongs to the thiamine-phosphate synthase family. Requires Mg(2+) as cofactor.

The catalysed reaction is 2-[(2R,5Z)-2-carboxy-4-methylthiazol-5(2H)-ylidene]ethyl phosphate + 4-amino-2-methyl-5-(diphosphooxymethyl)pyrimidine + 2 H(+) = thiamine phosphate + CO2 + diphosphate. The enzyme catalyses 2-(2-carboxy-4-methylthiazol-5-yl)ethyl phosphate + 4-amino-2-methyl-5-(diphosphooxymethyl)pyrimidine + 2 H(+) = thiamine phosphate + CO2 + diphosphate. It carries out the reaction 4-methyl-5-(2-phosphooxyethyl)-thiazole + 4-amino-2-methyl-5-(diphosphooxymethyl)pyrimidine + H(+) = thiamine phosphate + diphosphate. Its pathway is cofactor biosynthesis; thiamine diphosphate biosynthesis; thiamine phosphate from 4-amino-2-methyl-5-diphosphomethylpyrimidine and 4-methyl-5-(2-phosphoethyl)-thiazole: step 1/1. Condenses 4-methyl-5-(beta-hydroxyethyl)thiazole monophosphate (THZ-P) and 2-methyl-4-amino-5-hydroxymethyl pyrimidine pyrophosphate (HMP-PP) to form thiamine monophosphate (TMP). This chain is Thiamine-phosphate synthase, found in Salinibacter ruber (strain DSM 13855 / M31).